A 92-amino-acid chain; its full sequence is Small ribosomal subunit protein uS19 (92 aa).

Belongs to the universal ribosomal protein uS19 family.

Functionally, protein S19 forms a complex with S13 that binds strongly to the 16S ribosomal RNA. The chain is Small ribosomal subunit protein uS19 from Sodalis glossinidius (strain morsitans).